Consider the following 99-residue polypeptide: Putative pterin-4-alpha-carbinolamine dehydratase (99 aa).

Belongs to the pterin-4-alpha-carbinolamine dehydratase family.

The catalysed reaction is (4aS,6R)-4a-hydroxy-L-erythro-5,6,7,8-tetrahydrobiopterin = (6R)-L-erythro-6,7-dihydrobiopterin + H2O. The protein is Putative pterin-4-alpha-carbinolamine dehydratase of Saccharolobus islandicus (strain M.16.27) (Sulfolobus islandicus).